A 637-amino-acid chain; its full sequence is Limonene/alpha-pinene synthase, chloroplastic (637 aa).

Residues 1–56 (MALLSIVSLQVPKSCGLKSLISSSNVQKALCISTAVPTLRMRRRQKALVINMKLTT) constitute a chloroplast transit peptide. 3 residues coordinate Mg(2+): aspartate 388, aspartate 392, and aspartate 540. The DDXXD motif motif lies at 388-392 (DDMYD).

The protein belongs to the terpene synthase family. Tpsd subfamily. Requires Mg(2+) as cofactor. It depends on Mn(2+) as a cofactor. The cofactor is K(+).

The protein localises to the plastid. Its subcellular location is the chloroplast. It carries out the reaction (2E)-geranyl diphosphate = (4S)-limonene + diphosphate. The enzyme catalyses (2E)-geranyl diphosphate = (1S,5S)-alpha-pinene + diphosphate. Its pathway is terpene metabolism; oleoresin biosynthesis. In terms of biological role, involved in defensive oleoresin formation in conifers in response to insect attack or other injury. Involved in monoterpene (C10) olefins biosynthesis. This chain is Limonene/alpha-pinene synthase, chloroplastic (ag11), found in Abies grandis (Grand fir).